The chain runs to 215 residues: Cytochrome b6 (215 aa).

The helical transmembrane segment at Ile32–Phe52 threads the bilayer. Residue Cys35 coordinates heme c. His86 and His100 together coordinate heme b. Helical transmembrane passes span Ala90 to Phe110, Leu116 to Tyr136, and Ala186 to Ile206. Heme b is bound by residues His187 and His202.

It belongs to the cytochrome b family. PetB subfamily. In terms of assembly, the 4 large subunits of the cytochrome b6-f complex are cytochrome b6, subunit IV (17 kDa polypeptide, PetD), cytochrome f and the Rieske protein, while the 4 small subunits are PetG, PetL, PetM and PetN. The complex functions as a dimer. Heme b is required as a cofactor. Requires heme c as cofactor.

It localises to the cell inner membrane. Functionally, component of the cytochrome b6-f complex, which mediates electron transfer between photosystem II (PSII) and photosystem I (PSI), cyclic electron flow around PSI, and state transitions. The sequence is that of Cytochrome b6 from Gloeobacter violaceus (strain ATCC 29082 / PCC 7421).